A 381-amino-acid polypeptide reads, in one-letter code: Creatine kinase B-type (381 aa).

A Phosphoserine modification is found at S4. Residues 11–98 (KLRFPAEDEF…FDPIIEDRHG (88 aa)) form the Phosphagen kinase N-terminal domain. Phosphothreonine is present on T35. Residue K45 forms a Glycyl lysine isopeptide (Lys-Gly) (interchain with G-Cter in ubiquitin) linkage. Residue V72 participates in creatine binding. Residues 96 to 110 (RHGGYKPSDEHKTDL) show a composition bias toward basic and acidic residues. The interval 96–123 (RHGGYKPSDEHKTDLNPDNLQGGDDLDP) is disordered. Glycyl lysine isopeptide (Lys-Gly) (interchain with G-Cter in ubiquitin) cross-links involve residues K101 and K107. Y125 is subject to Phosphotyrosine. A Phosphagen kinase C-terminal domain is found at 125–367 (YVLSSRVRTG…KLLIEMEQRL (243 aa)). Residues 128–132 (SSRVR), R130, R132, and H191 each bind ATP. The interval 130–138 (RVRTGRSIR) is internal MTS-like signal. The residue at position 199 (S199) is a Phosphoserine. A creatine-binding site is contributed by E232. Position 236 (R236) interacts with ATP. Y269 is subject to 3'-nitrotyrosine. S285 contributes to the creatine binding site. Residue R292 coordinates ATP. A Phosphoserine modification is found at S309. ATP is bound by residues R320, 320–325 (RGTGGV), and D335. A Phosphothreonine modification is found at T322. K381 is covalently cross-linked (Glycyl lysine isopeptide (Lys-Gly) (interchain with G-Cter in ubiquitin)).

Belongs to the ATP:guanido phosphotransferase family. In terms of assembly, dimer of identical or non-identical chains, which can be either B (brain type) or M (muscle type). With MM being the major form in skeletal muscle and myocardium, MB existing in myocardium, and BB existing in many tissues, especially brain. Interacts with SLC12A6 (via C-terminus); the interaction may be required for SLC12A6 potassium-chloride cotransport activity. Post-translationally, ubiquitinated by the ECS(ASB9) complex, leading to its degradation by the proteasome.

The protein localises to the cytoplasm. The protein resides in the cytosol. Its subcellular location is the mitochondrion. It localises to the cell membrane. It catalyses the reaction creatine + ATP = N-phosphocreatine + ADP + H(+). Functionally, reversibly catalyzes the transfer of phosphate between ATP and various phosphogens (e.g. creatine phosphate). Creatine kinase isoenzymes play a central role in energy transduction in tissues with large, fluctuating energy demands, such as skeletal muscle, heart, brain and spermatozoa. Acts as a key regulator of adaptive thermogenesis as part of the futile creatine cycle: localizes to the mitochondria of thermogenic fat cells and acts by mediating phosphorylation of creatine to initiate a futile cycle of creatine phosphorylation and dephosphorylation. During the futile creatine cycle, creatine and N-phosphocreatine are in a futile cycle, which dissipates the high energy charge of N-phosphocreatine as heat without performing any mechanical or chemical work. This Oryctolagus cuniculus (Rabbit) protein is Creatine kinase B-type (CKB).